A 239-amino-acid chain; its full sequence is Tumor protein p53-inducible nuclear protein 1 (239 aa).

The short motif at 25-37 (EKEDDEWILVDFI) is the LIR element.

In terms of assembly, interacts with p53/TP53 and HIPK2. Interacts with PRKCG, GABARAP, GABARAPL1, GABARAPL2, MAP1LC3A, MAP1LC3B and MAP1LC3C. As to expression, specifically expressed by acinar cells of chronic pancreatitis tissue.

The protein resides in the cytoplasm. Its subcellular location is the cytosol. The protein localises to the nucleus. It localises to the PML body. It is found in the cytoplasmic vesicle. The protein resides in the autophagosome. Its function is as follows. Antiproliferative and proapoptotic protein involved in cell stress response which acts as a dual regulator of transcription and autophagy. Acts as a positive regulator of autophagy. In response to cellular stress or activation of autophagy, relocates to autophagosomes where it interacts with autophagosome-associated proteins GABARAP, GABARAPL1/L2, MAP1LC3A/B/C and regulates autophagy. Acts as an antioxidant and plays a major role in p53/TP53-driven oxidative stress response. Possesses both a p53/TP53-independent intracellular reactive oxygen species (ROS) regulatory function and a p53/TP53-dependent transcription regulatory function. Positively regulates p53/TP53 and p73/TP73 and stimulates their capacity to induce apoptosis and regulate cell cycle. In response to double-strand DNA breaks, promotes p53/TP53 phosphorylation on 'Ser-46' and subsequent apoptosis. Acts as a tumor suppressor by inducing cell death by an autophagy and caspase-dependent mechanism. Can reduce cell migration by regulating the expression of SPARC. This chain is Tumor protein p53-inducible nuclear protein 1 (Trp53inp1), found in Rattus norvegicus (Rat).